We begin with the raw amino-acid sequence, 152 residues long: Small ribosomal subunit protein uS13 (152 aa).

The protein belongs to the universal ribosomal protein uS13 family. In terms of assembly, part of the 30S ribosomal subunit. Forms a loose heterodimer with protein S19. Forms two bridges to the 50S subunit in the 70S ribosome.

In terms of biological role, located at the top of the head of the 30S subunit, it contacts several helices of the 16S rRNA. In the 70S ribosome it contacts the 23S rRNA (bridge B1a) and protein L5 of the 50S subunit (bridge B1b), connecting the 2 subunits; these bridges are implicated in subunit movement. The chain is Small ribosomal subunit protein uS13 from Pyrobaculum arsenaticum (strain DSM 13514 / JCM 11321 / PZ6).